We begin with the raw amino-acid sequence, 964 residues long: Probable outer membrane protein PmpE (964 aa).

Residues 1–18 (MKKAFFFFLIGNSLSGLA) form the signal peptide. One can recognise an Autotransporter domain in the interval 683–964 (LTPSGHPFWG…YLNGEIALRF (282 aa)).

This sequence belongs to the PMP outer membrane protein family.

Its subcellular location is the secreted. The protein localises to the cell wall. It localises to the cell outer membrane. The sequence is that of Probable outer membrane protein PmpE (pmpE) from Chlamydia trachomatis serovar D (strain ATCC VR-885 / DSM 19411 / UW-3/Cx).